A 421-amino-acid polypeptide reads, in one-letter code: Serine--tRNA ligase (421 aa).

Residue 231–233 participates in L-serine binding; that stretch reads TGE. Residue 262–264 coordinates ATP; sequence RRE. E285 contributes to the L-serine binding site. Residue 349–352 coordinates ATP; that stretch reads EVSS. S384 is a binding site for L-serine.

It belongs to the class-II aminoacyl-tRNA synthetase family. Type-1 seryl-tRNA synthetase subfamily. In terms of assembly, homodimer. The tRNA molecule binds across the dimer.

It localises to the cytoplasm. The enzyme catalyses tRNA(Ser) + L-serine + ATP = L-seryl-tRNA(Ser) + AMP + diphosphate + H(+). The catalysed reaction is tRNA(Sec) + L-serine + ATP = L-seryl-tRNA(Sec) + AMP + diphosphate + H(+). Its pathway is aminoacyl-tRNA biosynthesis; selenocysteinyl-tRNA(Sec) biosynthesis; L-seryl-tRNA(Sec) from L-serine and tRNA(Sec): step 1/1. Its function is as follows. Catalyzes the attachment of serine to tRNA(Ser). Is also able to aminoacylate tRNA(Sec) with serine, to form the misacylated tRNA L-seryl-tRNA(Sec), which will be further converted into selenocysteinyl-tRNA(Sec). This chain is Serine--tRNA ligase, found in Methylacidiphilum infernorum (isolate V4) (Methylokorus infernorum (strain V4)).